A 332-amino-acid chain; its full sequence is 2,3-diketo-L-gulonate reductase (332 aa).

His-44 functions as the Proton donor in the catalytic mechanism. NAD(+) contacts are provided by residues 168-174 (ITMIDMS), 224-225 (WK), and 304-306 (GHE).

Belongs to the LDH2/MDH2 oxidoreductase family. DlgD subfamily. As to quaternary structure, homodimer.

It localises to the cytoplasm. It catalyses the reaction 3-dehydro-L-gulonate + NAD(+) = 2,3-dioxo-L-gulonate + NADH + H(+). The catalysed reaction is 3-dehydro-L-gulonate + NADP(+) = 2,3-dioxo-L-gulonate + NADPH + H(+). Catalyzes the reduction of 2,3-diketo-L-gulonate in the presence of NADH, to form 3-keto-L-gulonate. The polypeptide is 2,3-diketo-L-gulonate reductase (Citrobacter koseri (strain ATCC BAA-895 / CDC 4225-83 / SGSC4696)).